We begin with the raw amino-acid sequence, 214 residues long: Ribonuclease P protein component 3 (214 aa).

The protein belongs to the eukaryotic/archaeal RNase P protein component 3 family. Consists of a catalytic RNA component and at least 4-5 protein subunits.

It is found in the cytoplasm. It catalyses the reaction Endonucleolytic cleavage of RNA, removing 5'-extranucleotides from tRNA precursor.. In terms of biological role, part of ribonuclease P, a protein complex that generates mature tRNA molecules by cleaving their 5'-ends. The polypeptide is Ribonuclease P protein component 3 (Thermococcus gammatolerans (strain DSM 15229 / JCM 11827 / EJ3)).